We begin with the raw amino-acid sequence, 262 residues long: Serine/arginine-rich splicing factor 10 (262 aa).

Residues 10–88 (TSLFVRNVAD…RQIEIQFAQG (79 aa)) form the RRM domain. Phosphoserine is present on residues Ser-23, Ser-106, and Ser-108. Residues 116–126 (YRRSRSRSYER) show a composition bias toward basic and acidic residues. Residues 116-262 (YRRSRSRSYE…SWTSPKSSGH (147 aa)) are disordered. Phosphoserine is present on residues Ser-129, Ser-131, and Ser-133. The span at 134 to 150 (FDYNYRRSYSPRNSRPT) shows a compositional bias: low complexity. Phosphoserine occurs at positions 158, 160, and 168. Composition is skewed to basic residues over residues 165–186 (FKHR…SKSQ) and 194–207 (KSRS…KTRG). Residues 209 to 234 (SKTDSKTHYKSGSRYEKESRKKEPPR) are compositionally biased toward basic and acidic residues. The span at 252-262 (RSWTSPKSSGH) shows a compositional bias: low complexity.

This sequence belongs to the splicing factor SR family. The phosphorylated but not the dephosphorylated form interacts with TRA2B/SFRS10. The dephosphorylated form interacts with SNRNP70. Isoform 1 interacts with FUS C-terminus. Isoform 3 interacts with FUS C-terminus. Interacts with YTHDC1, leading to inhibit RNA-binding activity of SRSF10. Post-translationally, phosphorylated. Fully dephosphorylated in mitosis and partially dephosphorylated on heat shock. In terms of tissue distribution, widely expressed.

It localises to the nucleus speckle. Its subcellular location is the cytoplasm. Functionally, splicing factor that in its dephosphorylated form acts as a general repressor of pre-mRNA splicing. Seems to interfere with the U1 snRNP 5'-splice recognition of SNRNP70. Required for splicing repression in M-phase cells and after heat shock. Also acts as a splicing factor that specifically promotes exon skipping during alternative splicing. Interaction with YTHDC1, a RNA-binding protein that recognizes and binds N6-methyladenosine (m6A)-containing RNAs, prevents SRSF10 from binding to its mRNA-binding sites close to m6A-containing regions, leading to inhibit exon skipping during alternative splicing. May be involved in regulation of alternative splicing in neurons, with isoform 1 acting as a positive and isoform 3 as a negative regulator. This is Serine/arginine-rich splicing factor 10 (SRSF10) from Homo sapiens (Human).